The following is a 202-amino-acid chain: Probable ATP-dependent Clp protease proteolytic subunit 3 (202 aa).

Catalysis depends on Ser101, which acts as the Nucleophile. Residue His126 is part of the active site.

The protein belongs to the peptidase S14 family. Fourteen ClpP subunits assemble into 2 heptameric rings which stack back to back to give a disk-like structure with a central cavity, resembling the structure of eukaryotic proteasomes.

It localises to the cytoplasm. It carries out the reaction Hydrolysis of proteins to small peptides in the presence of ATP and magnesium. alpha-casein is the usual test substrate. In the absence of ATP, only oligopeptides shorter than five residues are hydrolyzed (such as succinyl-Leu-Tyr-|-NHMec, and Leu-Tyr-Leu-|-Tyr-Trp, in which cleavage of the -Tyr-|-Leu- and -Tyr-|-Trp bonds also occurs).. In terms of biological role, cleaves peptides in various proteins in a process that requires ATP hydrolysis. Has a chymotrypsin-like activity. Plays a major role in the degradation of misfolded proteins. This Synechocystis sp. (strain ATCC 27184 / PCC 6803 / Kazusa) protein is Probable ATP-dependent Clp protease proteolytic subunit 3.